The chain runs to 514 residues: MVVEFKNEPGYDFSVQENVDMFKKALKDVEKELGQDIPLVINGEKIFKDDKIKSINPADTSQVIANASKATKQDVEDAFKAANEAYKSWKTWSANDRAELMLRVSAIIRRRKAEIAAIMVYEAGKPWDEAVGDAAEGIDFIEYYARSMMDLAQGKPVLDREGEHNKYFYKSIGTGVTIPPWNFPFAIMAGTTLAPVVAGNTVLLKPAEDTPYIAYKLMEILEEAGLPKGVVNFVPGDPKEIGDYLVDHKDTHFVTFTGSRATGTRIYERSAVVQEGQNFLKRVIAEMGGKDAIVVDENIDTDMAAEAIVTSAFGFSGQKCSACSRAIVHKDVYDEVLEKSIKLTKELTLGNTVDNTYMGPVINKKQFDKIKNYIEIGKEEGKLEQGGGTDDSKGYFVEPTIISGLKSKDRIMQEEIFGPVVGFVKVNDFDEAIEVANDTDYGLTGAVITNNREHWIKAVNEFDVGNLYLNRGCTSAVVGYHPFGGFKMSGTDAKTGSPDYLLHFLEQKVVSEMF.

Catalysis depends on residues Glu-286 and Cys-320.

Belongs to the aldehyde dehydrogenase family. RocA subfamily.

It catalyses the reaction L-glutamate 5-semialdehyde + NAD(+) + H2O = L-glutamate + NADH + 2 H(+). Its pathway is amino-acid degradation; L-proline degradation into L-glutamate; L-glutamate from L-proline: step 2/2. This is 1-pyrroline-5-carboxylate dehydrogenase from Staphylococcus aureus (strain MRSA252).